A 506-amino-acid chain; its full sequence is Anaerobic nitric oxide reductase transcription regulator NorR (506 aa).

Asp-57 carries the 4-aspartylphosphate modification. One can recognise a Sigma-54 factor interaction domain in the interval 187 to 416; it reads MIGLSPAMTQ…LEHAIHRAVV (230 aa). ATP contacts are provided by residues 215–222 and 278–287; these read GETGTGKE and ADNGTLFLDE. A DNA-binding region (H-T-H motif) is located at residues 481 to 500; it reads WAASARALETDVANLHRLAK.

It functions in the pathway nitrogen metabolism; nitric oxide reduction. Its function is as follows. Required for the expression of anaerobic nitric oxide (NO) reductase, acts as a transcriptional activator for at least the norVW operon. Activation also requires sigma-54. In Salmonella paratyphi C (strain RKS4594), this protein is Anaerobic nitric oxide reductase transcription regulator NorR.